An 88-amino-acid chain; its full sequence is Insertion element ISR1 uncharacterized 10 kDa protein A3 (88 aa).

This sequence belongs to the transposase 8 family.

This Rhizobium sp protein is Insertion element ISR1 uncharacterized 10 kDa protein A3.